Reading from the N-terminus, the 105-residue chain is DNA-directed RNA polymerase RPB9 homolog (105 aa).

Zn(2+)-binding residues include cysteine 4, cysteine 7, cysteine 24, cysteine 26, cysteine 73, cysteine 76, and cysteine 96. Residues 4–26 (CKACSSCMVRTYVDGNIIFRCSC) form a C4-type; atypical zinc finger.

The protein belongs to the Asfivirus DNA-directed RNA polymerase RPB9 homolog family. In terms of assembly, part of the viral DNA-directed RNA polymerase that consists of 8 polII-like subunits (RPB1, RPB2, RPB3, RPB5, RPB6, RPB7, RPB9, RPB10), a capping enzyme and a termination factor.

Its subcellular location is the host cytoplasm. Component of the DNA-directed RNA polymerase (RNAP) that catalyzes the transcription in the cytoplasm of viral DNA into RNA using the four ribonucleoside triphosphates as substrates. The chain is DNA-directed RNA polymerase RPB9 homolog from African swine fever virus (isolate Pig/Kenya/KEN-50/1950) (ASFV).